Consider the following 221-residue polypeptide: Urease accessory protein UreG (221 aa).

19–26 (GPVGSGKT) lines the GTP pocket.

This sequence belongs to the SIMIBI class G3E GTPase family. UreG subfamily. In terms of assembly, homodimer. UreD, UreF and UreG form a complex that acts as a GTP-hydrolysis-dependent molecular chaperone, activating the urease apoprotein by helping to assemble the nickel containing metallocenter of UreC. The UreE protein probably delivers the nickel.

It localises to the cytoplasm. Facilitates the functional incorporation of the urease nickel metallocenter. This process requires GTP hydrolysis, probably effectuated by UreG. Functionally, expression of the urease operon increases the likelihood of bacterial survival by contributing to acid resistance in vitro and in vivo in BALB/c mice. Y.enterocolitica enters the body via an oral path and must survive the acidic stomach before being able to colonize the intestinal mucosa. The chain is Urease accessory protein UreG from Yersinia enterocolitica.